The chain runs to 539 residues: Phosphatidylinositol 4-phosphate 5-kinase type-1 beta (539 aa).

The interval 1–21 (MSSTAENGDAVPGKQNEEKTY) is disordered. In terms of domain architecture, PIPK spans 25–395 (ASSAIKGAIQ…RFLKFMNSRV (371 aa)). A phosphoserine mark is found at S445, S447, and S448.

In terms of assembly, interacts with RAC1, AJUBA, PLD1, PLD2 and ARF1. In terms of tissue distribution, highly expressed in brain and testis. Barely detectable in liver and skeletal muscle.

Its subcellular location is the cytoplasm. It localises to the cytosol. The protein localises to the cell membrane. The protein resides in the endomembrane system. It carries out the reaction a 1,2-diacyl-sn-glycero-3-phospho-(1D-myo-inositol 4-phosphate) + ATP = a 1,2-diacyl-sn-glycero-3-phospho-(1D-myo-inositol-4,5-bisphosphate) + ADP + H(+). The enzyme catalyses 1-octadecanoyl-2-(5Z,8Z,11Z,14Z)-eicosatetraenoyl-sn-glycero-3-phospho-1D-myo-inositol 4-phosphate + ATP = 1-octadecanoyl-2-(5Z,8Z,11Z,14Z)-eicosatetraenoyl-sn-glycero-3-phospho-1D-myo-inositol 4,5-bisphosphate + ADP + H(+). It catalyses the reaction 1-octadecanoyl-2-(9Z)-octadecenoyl-sn-glycero-3-phospho-1D-myo-inositol 4-phosphate + ATP = 1-octadecanoyl-2-(9Z)-octadecenoyl-sn-glycero-3-phospho-1D-myo-inositol 4,5-bisphosphate + ADP + H(+). The catalysed reaction is 1-octadecanoyl-2-(9Z)-octadecenoyl-sn-glycero-3-phospho-1D-myo-inositol + ATP = 1-octadecanoyl-2-(9Z)-octadecenoyl-sn-glycero-3-phospho-1D-myo-inositol 5-phosphate + ADP + H(+). It carries out the reaction 1-octadecanoyl-2-(9Z,12Z)-octadecadienoyl-sn-glycero-3-phospho-1D-myo-inositol + ATP = 1-octadecanoyl-2-(9Z,12Z)-octadecadienoyl-sn-glycero-3-phospho-1D-myo-inositol 5-phosphate + ADP + H(+). The enzyme catalyses 1-octadecanoyl-2-(5Z,8Z,11Z,14Z-eicosatetraenoyl)-sn-glycero-3-phospho-(1D-myo-inositol) + ATP = 1-octadecanoyl-2-(5Z,8Z,11Z,14Z)-eicosatetraenoyl-sn-glycero-3-phospho-1D-myo-inositol 5-phosphate + ADP + H(+). It catalyses the reaction 1,2-di-(9Z,12Z)-octadecadienoyl-sn-glycero-3-phospho-1D-myo-inositol + ATP = 1,2-di(9Z,12Z)-octadecadienoyl-sn-glycero-3-phospho-1D-myo-inositol 5-phosphate + ADP + H(+). With respect to regulation, activated by phosphatidic acid. Its function is as follows. Catalyzes the phosphorylation of phosphatidylinositol 4-phosphate (PtdIns(4)P/PI4P) to form phosphatidylinositol 4,5-bisphosphate (PtdIns(4,5)P2/PIP2), a lipid second messenger that regulates several cellular processes such as signal transduction, vesicle trafficking, actin cytoskeleton dynamics, cell adhesion, and cell motility. PtdIns(4,5)P2 can directly act as a second messenger or can be utilized as a precursor to generate other second messengers: inositol 1,4,5-trisphosphate (IP3), diacylglycerol (DAG) or phosphatidylinositol-3,4,5-trisphosphate (PtdIns(3,4,5)P3/PIP3). Mediates RAC1-dependent reorganization of actin filaments. Contributes to the activation of phospholipase PLD2. Together with PIP5K1A, is required, after stimulation by G-protein coupled receptors, for the synthesis of IP3 that will induce stable platelet adhesion. The chain is Phosphatidylinositol 4-phosphate 5-kinase type-1 beta from Mus musculus (Mouse).